The chain runs to 184 residues: Large ribosomal subunit protein uL5c (184 aa).

It belongs to the universal ribosomal protein uL5 family. As to quaternary structure, part of the 50S ribosomal subunit; contacts the 5S rRNA.

It is found in the plastid. The protein resides in the chloroplast. Functionally, binds 5S rRNA, forms part of the central protuberance of the 50S subunit. In Ostreococcus tauri, this protein is Large ribosomal subunit protein uL5c (rpl5).